The chain runs to 156 residues: ATP synthase subunit b (156 aa).

Residues 7-29 (LFAQMVVFLVLAWFTMKFVWPPL) traverse the membrane as a helical segment.

The protein belongs to the ATPase B chain family. As to quaternary structure, F-type ATPases have 2 components, F(1) - the catalytic core - and F(0) - the membrane proton channel. F(1) has five subunits: alpha(3), beta(3), gamma(1), delta(1), epsilon(1). F(0) has three main subunits: a(1), b(2) and c(10-14). The alpha and beta chains form an alternating ring which encloses part of the gamma chain. F(1) is attached to F(0) by a central stalk formed by the gamma and epsilon chains, while a peripheral stalk is formed by the delta and b chains.

It is found in the cell inner membrane. In terms of biological role, f(1)F(0) ATP synthase produces ATP from ADP in the presence of a proton or sodium gradient. F-type ATPases consist of two structural domains, F(1) containing the extramembraneous catalytic core and F(0) containing the membrane proton channel, linked together by a central stalk and a peripheral stalk. During catalysis, ATP synthesis in the catalytic domain of F(1) is coupled via a rotary mechanism of the central stalk subunits to proton translocation. Its function is as follows. Component of the F(0) channel, it forms part of the peripheral stalk, linking F(1) to F(0). This Burkholderia lata (strain ATCC 17760 / DSM 23089 / LMG 22485 / NCIMB 9086 / R18194 / 383) protein is ATP synthase subunit b.